A 267-amino-acid chain; its full sequence is Integral membrane protein 2C (267 aa).

A Phosphothreonine modification is found at threonine 37. The chain crosses the membrane as a helical; Signal-anchor for type II membrane protein span at residues valine 55–alanine 75. Positions phenylalanine 136–leucine 230 constitute a BRICHOS domain. The cysteines at positions 163 and 222 are disulfide-linked. An N-linked (GlcNAc...) asparagine glycan is attached at asparagine 169.

Belongs to the ITM2 family. As to quaternary structure, interacts with BACE1. Interacts with APP. Interacts with STMN2. In terms of processing, type I membrane-bound, as well as soluble, furin has a pre-eminent role in ITM2C proteolytic processing. PCSK7 and PCSK5 may also be involved although to a lesser extent. The soluble form of PCSK7 is incapable of processing ITM2C. Fails to undergo shedding by ADAM10 and intramembrane cleavage by SPPL2B.

It is found in the lysosome membrane. Its subcellular location is the cell membrane. In terms of biological role, negative regulator of amyloid-beta peptide production. May inhibit the processing of APP by blocking its access to alpha- and beta-secretase. Binding to the beta-secretase-cleaved APP C-terminal fragment is negligible, suggesting that ITM2C is a poor gamma-secretase cleavage inhibitor. May play a role in TNF-induced cell death and neuronal differentiation. The protein is Integral membrane protein 2C (ITM2C) of Macaca fascicularis (Crab-eating macaque).